Consider the following 212-residue polypeptide: Holliday junction branch migration complex subunit RuvA (212 aa).

Residues 1-70 (MISYLKGSPI…EDQQILYGFS (70 aa)) are domain I. The segment at 71–149 (TTAERELFRQ…QWRKMVGVTV (79 aa)) is domain II. The segment at 150–160 (TSSAAMPSLEI) is flexible linker. The tract at residues 160-212 (ILEDIEMTLLALGYTNEEINKAISTLSQDNLMLKNTNTEEWIKEAIAWLSQGT) is domain III.

This sequence belongs to the RuvA family. As to quaternary structure, homotetramer. Forms an RuvA(8)-RuvB(12)-Holliday junction (HJ) complex. HJ DNA is sandwiched between 2 RuvA tetramers; dsDNA enters through RuvA and exits via RuvB. An RuvB hexamer assembles on each DNA strand where it exits the tetramer. Each RuvB hexamer is contacted by two RuvA subunits (via domain III) on 2 adjacent RuvB subunits; this complex drives branch migration. In the full resolvosome a probable DNA-RuvA(4)-RuvB(12)-RuvC(2) complex forms which resolves the HJ.

Its subcellular location is the cytoplasm. The RuvA-RuvB-RuvC complex processes Holliday junction (HJ) DNA during genetic recombination and DNA repair, while the RuvA-RuvB complex plays an important role in the rescue of blocked DNA replication forks via replication fork reversal (RFR). RuvA specifically binds to HJ cruciform DNA, conferring on it an open structure. The RuvB hexamer acts as an ATP-dependent pump, pulling dsDNA into and through the RuvAB complex. HJ branch migration allows RuvC to scan DNA until it finds its consensus sequence, where it cleaves and resolves the cruciform DNA. This chain is Holliday junction branch migration complex subunit RuvA, found in Crocosphaera subtropica (strain ATCC 51142 / BH68) (Cyanothece sp. (strain ATCC 51142)).